A 223-amino-acid polypeptide reads, in one-letter code: MAYSRLAPHCGLPVYGHHIGNSEMSGGFSWSSLGSSLSSGLSRIGSFLGSTAQRIGNSQGFQQAKEGFLKSGVLENVGSLAGQTVSSLADIGRLKLESDLQKLRERALGAQQQQLPPLTQEQLAQLLASTQTELPSSAPAVPMPIPAPVPPLVTGVRPGQMRPEVLPPDRGVALGPLIEEPAPRPIAVPGSRPRKRKRVRGWGSALEDMLGDGVCYRSKRYCY.

The propeptide occupies Met1–Gly27. The amphipathic alpha-helix essential for membrane lytic activity stretch occupies residues Phe28 to Thr51. The segment at Ser29–Ser50 is involved in endosomal membrane lysis. Interaction with hexon protein regions lie at residues Gly45–Ser71 and Leu206–Asp212. 2 consecutive short sequence motifs (nuclear export signal) follow at residues Ala64 to Val73 and Ser204 to Cys215. Positions Gly213 to Tyr223 are binds to importin alpha/beta, involved in hexon nuclear import.

This sequence belongs to the adenoviridae protein VI family. As to quaternary structure, interacts with hexon protein; this interaction allows nuclear import of hexon trimers and possibly pre-capsid assembly. Interacts (via C-terminal NLS) with importin alpha/beta. Interacts (via PPxY motif) with host NEDD4 ubiquitine ligase; this interaction might play a role in virus intracellular transport during entry. Part of a complex composed of the core-capsid bridging protein, the endosome lysis protein VI and the hexon-linking protein VIII; these interactions bridge the virus core to the capsid. Interacts with peripentonal hexons; this interaction stabilizes the capsid by gluing two peripentonal hexons together and joining them with an adjacent group-of-nine hexon. In terms of assembly, heterodimer with the viral protease; disulfide-linked. Interacts with the viral protease. In terms of processing, ubiquitinated by Nedd4 following partial capsid disassembly; which might play a role in intracellular virus movement during entry. Post-translationally, contains the major nuclear import and export signals. Proteolytically removed during virion maturation. The processing of the C-terminus turns the precursor into a mature viral structural protein and abrogates its ability to promote hexon import and act as a potential chaperone protein.

It localises to the host nucleus. The protein resides in the host cytoplasm. It is found in the virion. During virus assembly, promotes hexon trimers nuclear import through nuclear pore complexes via an importin alpha/beta-dependent mechanism. By analogy to herpesviruses capsid assembly, might act as a chaperone to promote the formation of the icosahedral capsid. In terms of biological role, structural component of the virion that provides increased stability to the particle shell through its interaction with the core-capsid bridging protein and the hexon-linking protein VIII. Fibers shedding during virus entry into host cell allows the endosome lysis protein to be exposed as a membrane-lytic peptide. Exhibits pH-independent membrane fragmentation activity and probably mediates viral rapid escape from host endosome via organellar membrane lysis. It is not clear if it then remains partially associated with the capsid and involved in the intracellular microtubule-dependent transport of capsid to the nucleus, or if it is lost during endosomal penetration. Its function is as follows. Cofactor that activates the viral protease. Binds to viral protease in a 1:1 ratio. In Pantherophis guttatus (Corn snake), this protein is Pre-protein VI.